An 89-amino-acid chain; its full sequence is Small ribosomal subunit protein uS17 (89 aa).

This sequence belongs to the universal ribosomal protein uS17 family. As to quaternary structure, part of the 30S ribosomal subunit.

Functionally, one of the primary rRNA binding proteins, it binds specifically to the 5'-end of 16S ribosomal RNA. The sequence is that of Small ribosomal subunit protein uS17 from Bacteroides fragilis (strain ATCC 25285 / DSM 2151 / CCUG 4856 / JCM 11019 / LMG 10263 / NCTC 9343 / Onslow / VPI 2553 / EN-2).